Reading from the N-terminus, the 85-residue chain is Neutrophil elastase 2A (85 aa).

The Peptidase S1 domain maps to 1–85 (IVGGRAAEPH…VAQGVFSFVR (85 aa)). Residue Ser-67 is the Charge relay system of the active site.

It belongs to the peptidase S1 family. Elastase subfamily.

In terms of biological role, may be involved in the degradation of connective tissue in chronic lung disease. In Equus caballus (Horse), this protein is Neutrophil elastase 2A.